The primary structure comprises 444 residues: Phosphoglucosamine mutase (444 aa).

Residue Ser-103 is the Phosphoserine intermediate of the active site. Mg(2+) is bound by residues Ser-103, Asp-241, Asp-243, and Asp-245. Residue Ser-103 is modified to Phosphoserine.

The protein belongs to the phosphohexose mutase family. Mg(2+) serves as cofactor. Post-translationally, activated by phosphorylation.

The enzyme catalyses alpha-D-glucosamine 1-phosphate = D-glucosamine 6-phosphate. In terms of biological role, catalyzes the conversion of glucosamine-6-phosphate to glucosamine-1-phosphate. The protein is Phosphoglucosamine mutase of Deinococcus geothermalis (strain DSM 11300 / CIP 105573 / AG-3a).